The primary structure comprises 114 residues: T cell receptor beta variable 25-1 (114 aa).

The N-terminal stretch at 1–21 is a signal peptide; the sequence is MTIRLLCYVGFYFLGAGLMEA. Positions 22-114 constitute an Ig-like domain; sequence DIYQTPRYLV…TSQYLCASSE (93 aa). C42 and C110 are oxidised to a cystine. Residue N72 is glycosylated (N-linked (GlcNAc...) asparagine).

As to quaternary structure, alpha-beta TR is a heterodimer composed of an alpha and beta chain; disulfide-linked. The alpha-beta TR is associated with the transmembrane signaling CD3 coreceptor proteins to form the TR-CD3 (TcR or TCR). The assembly of alpha-beta TR heterodimers with CD3 occurs in the endoplasmic reticulum where a single alpha-beta TR heterodimer associates with one CD3D-CD3E heterodimer, one CD3G-CD3E heterodimer and one CD247 homodimer forming a stable octameric structure. CD3D-CD3E and CD3G-CD3E heterodimers preferentially associate with TR alpha and TR beta chains, respectively. The association of the CD247 homodimer is the last step of TcR assembly in the endoplasmic reticulum and is required for transport to the cell surface.

Its subcellular location is the cell membrane. In terms of biological role, v region of the variable domain of T cell receptor (TR) beta chain that participates in the antigen recognition. Alpha-beta T cell receptors are antigen specific receptors which are essential to the immune response and are present on the cell surface of T lymphocytes. Recognize peptide-major histocompatibility (MH) (pMH) complexes that are displayed by antigen presenting cells (APC), a prerequisite for efficient T cell adaptive immunity against pathogens. Binding of alpha-beta TR to pMH complex initiates TR-CD3 clustering on the cell surface and intracellular activation of LCK that phosphorylates the ITAM motifs of CD3G, CD3D, CD3E and CD247 enabling the recruitment of ZAP70. In turn ZAP70 phosphorylates LAT, which recruits numerous signaling molecules to form the LAT signalosome. The LAT signalosome propagates signal branching to three major signaling pathways, the calcium, the mitogen-activated protein kinase (MAPK) kinase and the nuclear factor NF-kappa-B (NF-kB) pathways, leading to the mobilization of transcription factors that are critical for gene expression and essential for T cell growth and differentiation. The T cell repertoire is generated in the thymus, by V-(D)-J rearrangement. This repertoire is then shaped by intrathymic selection events to generate a peripheral T cell pool of self-MH restricted, non-autoaggressive T cells. Post-thymic interaction of alpha-beta TR with the pMH complexes shapes TR structural and functional avidity. The polypeptide is T cell receptor beta variable 25-1 (Homo sapiens (Human)).